A 145-amino-acid polypeptide reads, in one-letter code: D-aminoacyl-tRNA deacylase (145 aa).

The short motif at 137–138 (GP) is the Gly-cisPro motif, important for rejection of L-amino acids element.

Belongs to the DTD family. Homodimer.

Its subcellular location is the cytoplasm. It carries out the reaction glycyl-tRNA(Ala) + H2O = tRNA(Ala) + glycine + H(+). The catalysed reaction is a D-aminoacyl-tRNA + H2O = a tRNA + a D-alpha-amino acid + H(+). Its function is as follows. An aminoacyl-tRNA editing enzyme that deacylates mischarged D-aminoacyl-tRNAs. Also deacylates mischarged glycyl-tRNA(Ala), protecting cells against glycine mischarging by AlaRS. Acts via tRNA-based rather than protein-based catalysis; rejects L-amino acids rather than detecting D-amino acids in the active site. By recycling D-aminoacyl-tRNA to D-amino acids and free tRNA molecules, this enzyme counteracts the toxicity associated with the formation of D-aminoacyl-tRNA entities in vivo and helps enforce protein L-homochirality. The sequence is that of D-aminoacyl-tRNA deacylase from Photobacterium profundum (strain SS9).